The following is a 509-amino-acid chain: Pentatricopeptide repeat-containing protein At2g13420, mitochondrial (509 aa).

The N-terminal 19 residues, 1 to 19 (MLLLKQISPPFHLHQLRRR), are a transit peptide targeting the mitochondrion. PPR repeat units follow at residues 172–202 (RLVE…RKEE), 206–240 (DEKV…GIEP), 241–285 (NVVT…GIEP), 286–320 (DVTS…GISP), 321–355 (TIET…GISP), 356–390 (SSAT…LCKP), 391–425 (STQT…ETGP), and 426–460 (DLDS…GFLP).

This sequence belongs to the PPR family. P subfamily.

It is found in the mitochondrion. The polypeptide is Pentatricopeptide repeat-containing protein At2g13420, mitochondrial (Arabidopsis thaliana (Mouse-ear cress)).